We begin with the raw amino-acid sequence, 583 residues long: GTP diphosphokinase CRSH1, chloroplastic (583 aa).

Low complexity predominate over residues 1–13 (MATAATTSAAAIP). The segment at 1–68 (MATAATTSAA…SSSSSTPAEG (68 aa)) is disordered. The N-terminal 69 residues, 1-69 (MATAATTSAA…SSSSTPAEGG (69 aa)), are a transit peptide targeting the chloroplast. Basic residues predominate over residues 19-39 (RRQHPHPRRPGLRPRRLHRLR). Residues 40–66 (LPAQAAAAAAASSPSTSSSSSSSSTPA) show a composition bias toward low complexity. The HD domain maps to 119–219 (ALARALAIAA…LELALKLDMM (101 aa)). EF-hand domains lie at 473-508 (GDSN…LGAG) and 510-542 (KDAK…IELM). Residues D486, N488, D490, R492, E497, D520, N522, D524, S526, and E531 each coordinate Ca(2+).

It belongs to the RelA/SpoT family. Expressed in roots and shoots.

It is found in the plastid. The protein localises to the chloroplast. The catalysed reaction is GTP + ATP = guanosine 3'-diphosphate 5'-triphosphate + AMP. Its activity is regulated as follows. Activated by calcium. Its function is as follows. Possesses calcium-dependent ppGpp (guanosine 3'-diphosphate 5'-diphosphate) synthetase activity in vitro and is able to functionally complement E.coli relA mutants. May be involved in a rapid plant ppGpp-mediated response to pathogens and other stresses. The sequence is that of GTP diphosphokinase CRSH1, chloroplastic from Oryza sativa subsp. japonica (Rice).